The sequence spans 275 residues: Translation initiation factor 2 subunit alpha (275 aa).

The 72-residue stretch at 12–83 folds into the S1 motif domain; that stretch reads GEFVIATVKS…NKGHIDLSLK (72 aa).

Belongs to the eIF-2-alpha family. Heterotrimer composed of an alpha, a beta and a gamma chain.

In terms of biological role, eIF-2 functions in the early steps of protein synthesis by forming a ternary complex with GTP and initiator tRNA. This Thermococcus onnurineus (strain NA1) protein is Translation initiation factor 2 subunit alpha.